The sequence spans 490 residues: Betaine aldehyde dehydrogenase (490 aa).

K(+) contacts are provided by threonine 26, isoleucine 27, and aspartate 93. 150–152 is a binding site for NAD(+); it reads GAW. Residue lysine 162 is the Charge relay system of the active site. Residue 176–179 coordinates NAD(+); the sequence is KPSE. Valine 180 contributes to the K(+) binding site. Residue 230-233 participates in NAD(+) binding; that stretch reads GVAS. Leucine 246 provides a ligand contact to K(+). The active-site Proton acceptor is the glutamate 252. The NAD(+) site is built by glycine 254, cysteine 286, and glutamate 387. The Nucleophile role is filled by cysteine 286. Cysteine 286 carries the cysteine sulfenic acid (-SOH) modification. K(+)-binding residues include lysine 457 and glycine 460. Glutamate 464 (charge relay system) is an active-site residue.

It belongs to the aldehyde dehydrogenase family. As to quaternary structure, dimer of dimers. The cofactor is K(+).

It carries out the reaction betaine aldehyde + NAD(+) + H2O = glycine betaine + NADH + 2 H(+). It participates in amine and polyamine biosynthesis; betaine biosynthesis via choline pathway; betaine from betaine aldehyde: step 1/1. Its function is as follows. Involved in the biosynthesis of the osmoprotectant glycine betaine. Catalyzes the irreversible oxidation of betaine aldehyde to the corresponding acid. The sequence is that of Betaine aldehyde dehydrogenase from Escherichia coli O8 (strain IAI1).